Consider the following 346-residue polypeptide: MDYKTAGVDVTAGRAFVERIKSCVEKTHKSEVIGGLGGFGGCIRIPKGFESPVLVSGTDGVGTKLELAQQYGCHFGVGIDLVAMCVNDVITNGARPLFFLDYIASGTLTPDALAEVIEGIAAGCCQSDCSLLGGETAEMPGFYPIGRYDLAGFCVGIVENHHLIDGTKINCGDQIIGIKSNGVHSNGFSLVRKVLSMANVDENTLFGKDKRNLIQSLLEPTAIYVQLVEKLLRENLPIHGMTHITGGGLPENLPRIFPSGLSPHIDITTWEITEIFNWLQNAGDIPEIDLWNTFNMGIGFCLIVPKNEVNSALEICIKNDFEAWNIGQVVESQNNSKNIGIFGIPS.

Belongs to the AIR synthase family.

The protein localises to the cytoplasm. It carries out the reaction 2-formamido-N(1)-(5-O-phospho-beta-D-ribosyl)acetamidine + ATP = 5-amino-1-(5-phospho-beta-D-ribosyl)imidazole + ADP + phosphate + H(+). Its pathway is purine metabolism; IMP biosynthesis via de novo pathway; 5-amino-1-(5-phospho-D-ribosyl)imidazole from N(2)-formyl-N(1)-(5-phospho-D-ribosyl)glycinamide: step 2/2. The polypeptide is Phosphoribosylformylglycinamidine cyclo-ligase (Prochlorococcus marinus (strain NATL2A)).